Here is a 231-residue protein sequence, read N- to C-terminus: Orotidine 5'-phosphate decarboxylase (231 aa).

Residues D11, K33, 60-69 (DLKFHDIPNT), T120, R181, Q190, G210, and R211 each bind substrate. The active-site Proton donor is K62.

It belongs to the OMP decarboxylase family. Type 1 subfamily. As to quaternary structure, homodimer.

It catalyses the reaction orotidine 5'-phosphate + H(+) = UMP + CO2. Its pathway is pyrimidine metabolism; UMP biosynthesis via de novo pathway; UMP from orotate: step 2/2. In terms of biological role, catalyzes the decarboxylation of orotidine 5'-monophosphate (OMP) to uridine 5'-monophosphate (UMP). This Shewanella oneidensis (strain ATCC 700550 / JCM 31522 / CIP 106686 / LMG 19005 / NCIMB 14063 / MR-1) protein is Orotidine 5'-phosphate decarboxylase.